The sequence spans 261 residues: Polyamine aminopropyltransferase (261 aa).

The 219-residue stretch at 1–219 folds into the PABS domain; the sequence is MHPFRRRVRP…AVMAFRQSPS (219 aa). S-methyl-5'-thioadenosine contacts are provided by residues Asp-96 and 124–125; that span reads DG. Residue Asp-142 is the Proton acceptor of the active site.

Belongs to the spermidine/spermine synthase family. In terms of assembly, homodimer or homotetramer.

The protein localises to the cytoplasm. The catalysed reaction is S-adenosyl 3-(methylsulfanyl)propylamine + putrescine = S-methyl-5'-thioadenosine + spermidine + H(+). The protein operates within amine and polyamine biosynthesis; spermidine biosynthesis; spermidine from putrescine: step 1/1. Its function is as follows. Catalyzes the irreversible transfer of a propylamine group from the amino donor S-adenosylmethioninamine (decarboxy-AdoMet) to putrescine (1,4-diaminobutane) to yield spermidine. The chain is Polyamine aminopropyltransferase from Chromobacterium violaceum (strain ATCC 12472 / DSM 30191 / JCM 1249 / CCUG 213 / NBRC 12614 / NCIMB 9131 / NCTC 9757 / MK).